Here is a 361-residue protein sequence, read N- to C-terminus: DNA polymerase subunit gamma-2, mitochondrial (361 aa).

Residues 1–18 constitute a mitochondrion transit peptide; the sequence is MSRIQRCFKSLASAGFFR.

As to quaternary structure, component of the DNA polymerase gamma complex consisting of two subunits: the catalytic subunit DNApol-gamma/DNApolG1 and the accessory subunit PolG2/DNApol-gamma35. Expressed in ovaries (at protein level).

It localises to the mitochondrion. In terms of biological role, as accessory component of the DNA polymerase gamma complex is involved in the replication of mitochondrial DNA. Does not bind DNA. Essential for mitochondrial DNA maintenance and larval development. This is DNA polymerase subunit gamma-2, mitochondrial from Drosophila melanogaster (Fruit fly).